A 210-amino-acid polypeptide reads, in one-letter code: Ovomucoid (210 aa).

The signal sequence occupies residues Met1–Gly24. Kazal-like domains follow at residues Ala25–Glu88, Thr89–Lys153, and Ala156–Cys210. 3 cysteine pairs are disulfide-bonded: Cys29–Cys68, Cys46–Cys65, and Cys54–Cys86. Asn34 carries an N-linked (GlcNAc...) asparagine glycan. N-linked (GlcNAc...) asparagine glycosylation is found at Asn77, Asn93, and Asn99. 6 cysteine pairs are disulfide-bonded: Cys94–Cys133, Cys111–Cys130, Cys119–Cys151, Cys162–Cys192, Cys170–Cys189, and Cys178–Cys210. An N-linked (GlcNAc...) asparagine; partial glycan is attached at Asn199.

It localises to the secreted. Functionally, serine protease inhibitor. Inhibits trypsin. This is Ovomucoid from Gallus gallus (Chicken).